The following is a 297-amino-acid chain: Protein-methionine-sulfoxide reductase catalytic subunit MsrP (297 aa).

Residues 1–35 (MLITPEKLYKQRRNFLKLGAGALISSSVLASKLSA) constitute a signal peptide (tat-type signal). Residues 62-63 (YE), cysteine 116, threonine 151, asparagine 201, arginine 206, and 217-219 (SIK) each bind Mo-molybdopterin.

It belongs to the MsrP family. In terms of assembly, heterodimer of a catalytic subunit (MsrP) and a heme-binding subunit (MsrQ). Mo-molybdopterin serves as cofactor. Predicted to be exported by the Tat system. The position of the signal peptide cleavage has not been experimentally proven.

Its subcellular location is the periplasm. The catalysed reaction is L-methionyl-[protein] + a quinone + H2O = L-methionyl-(S)-S-oxide-[protein] + a quinol. It carries out the reaction L-methionyl-[protein] + a quinone + H2O = L-methionyl-(R)-S-oxide-[protein] + a quinol. Part of the MsrPQ system that repairs oxidized periplasmic proteins containing methionine sulfoxide residues (Met-O), using respiratory chain electrons. Thus protects these proteins from oxidative-stress damage caused by reactive species of oxygen and chlorine generated by the host defense mechanisms. MsrPQ is essential for the maintenance of envelope integrity under bleach stress, rescuing a wide series of structurally unrelated periplasmic proteins from methionine oxidation. The catalytic subunit MsrP is non-stereospecific, being able to reduce both (R-) and (S-) diastereoisomers of methionine sulfoxide. The chain is Protein-methionine-sulfoxide reductase catalytic subunit MsrP from Campylobacter jejuni subsp. jejuni serotype O:2 (strain ATCC 700819 / NCTC 11168).